A 397-amino-acid chain; its full sequence is MDEALTNASAIGDQRQKIEQYKLILSSVLSSNDLLQAQRFIDHILSDDVPLVVSRQLLQSFAQELGRLEPETQKEIAQFTLTQIQPRVVSFEEQALVIREKLAGLYESEQEWSKAAQMLSGIDLDSGMRAVDDNFKLSKCIQIARLYLEDDDAVNAEAFINKASFLVSNSQNEVLNLQYKVCYARILDMKRKFLEAALRYYGISQIEQRQIGDEEIDENALEQALSAAVTCTILAGAGPQRSRVLATLYKDERCSKLKIYPILQKVYLERILRRPEIDAFSEELRPHQKASLPDKSTVLDRAMIEHNLLSASKLYTNIRFDELGTLLAIDPRKAEKIAANMIGQDRMRGSIDQEEAVIHFEDDVEELQQWDQQISGLCQALNDILDGMAKKGMSVPV.

M1 carries the post-translational modification N-acetylmethionine. The PCI domain maps to 197–365 (ALRYYGISQI…AVIHFEDDVE (169 aa)).

The protein belongs to the CSN4 family. Component of the CSN complex, probably composed of CSN1, CSN2, CSN3, CSN4, CSN5 (CSN5A or CSN5B), CSN6 (CSN6A or CSN6B), CSN7 and CSN8. Interacts with itself. In the complex, it is located in the center and probably interacts directly with CSN1, CSN2, CSN3, CSN4, CSN5A or CSN5B, CSN6A or CSN6B, CSN7 and CSN8. Interacts with COP10. Binds to the translation initiation factors TIF3E1.

Its subcellular location is the cytoplasm. It is found in the nucleus. Functionally, component of the COP9 signalosome complex (CSN), a complex involved in various cellular and developmental processes such as photomorphogenesis and auxin and jasmonate responses. The CSN complex is an essential regulator of the ubiquitin (Ubl) conjugation pathway by mediating the deneddylation of the cullin subunits of SCF-type E3 ligase complexes, leading to decrease the Ubl ligase activity of SCF. It is involved in repression of photomorphogenesis in darkness by regulating the activity of COP1-containing Ubl ligase complexes. The complex is also required for degradation of IAA6 by regulating the activity of the Ubl ligase SCF-TIR complex. This chain is COP9 signalosome complex subunit 4 (CSN4), found in Arabidopsis thaliana (Mouse-ear cress).